The following is a 128-amino-acid chain: Iron-sulfur cluster insertion protein ErpA (128 aa).

Cys56, Cys120, and Cys122 together coordinate iron-sulfur cluster.

The protein belongs to the HesB/IscA family. Homodimer. Iron-sulfur cluster is required as a cofactor.

Its function is as follows. Required for insertion of 4Fe-4S clusters for at least IspG. The protein is Iron-sulfur cluster insertion protein ErpA of Xylella fastidiosa (strain M12).